A 307-amino-acid polypeptide reads, in one-letter code: 3-ketodihydrosphingosine reductase TSC10 (307 aa).

Leucine 11 provides a ligand contact to NADP(+). Residues glycine 14, serine 16, and glycine 18 each contribute to the NADPH site. Residues 14 to 18 carry the GXSXG motif; it reads GGSQG. Residue leucine 19 participates in NADP(+) binding. Residues arginine 40, lysine 44, and leucine 74 each contribute to the NADPH site. The active-site Proton donor is the serine 147. NADP(+)-binding residues include tyrosine 161, lysine 165, and serine 194. Tyrosine 161 (proton acceptor) is an active-site residue. The Lowers pKa of active site Tyr role is filled by lysine 165. The helical transmembrane segment at 261-281 threads the bilayer; sequence YFLWPLGWLLGALVNLLVVPI.

This sequence belongs to the short-chain dehydrogenases/reductases (SDR) family.

It is found in the endoplasmic reticulum membrane. It catalyses the reaction sphinganine + NADP(+) = 3-oxosphinganine + NADPH + H(+). Its pathway is lipid metabolism; sphingolipid metabolism. Catalyzes the reduction of 3'-oxosphinganine (3-ketodihydrosphingosine/KDS) to sphinganine (dihydrosphingosine/DHS), the second step of de novo sphingolipid biosynthesis. This Eremothecium gossypii (strain ATCC 10895 / CBS 109.51 / FGSC 9923 / NRRL Y-1056) (Yeast) protein is 3-ketodihydrosphingosine reductase TSC10 (TSC10).